Reading from the N-terminus, the 155-residue chain is Nuclear cap-binding protein subunit 2 (155 aa).

Residues tyrosine 19, tyrosine 42, 111–115 (RTDWD), 122–126 (RQYGR), and 132–133 (QV) contribute to the mRNA site. The region spanning 39-117 (NTLYVGNLSF…RIIRTDWDAG (79 aa)) is the RRM domain. The interval 122 to 155 (RQYGRGKSGGQVRDEYRQDYDPARGGYGKVVARP) is disordered. A compositionally biased stretch (basic and acidic residues) spans 133 to 143 (VRDEYRQDYDP).

This sequence belongs to the RRM NCBP2 family. Component of the nuclear cap-binding complex (CBC), a heterodimer composed of ncbp1/cbp80 and ncbp2/cbp20 that interacts with m7GpppG-capped RNA.

The protein resides in the nucleus. It localises to the cytoplasm. Its function is as follows. Component of the cap-binding complex (CBC), which binds co-transcriptionally to the 5' cap of pre-mRNAs and is involved in various processes such as pre-mRNA splicing, translation regulation, nonsense-mediated mRNA decay, RNA-mediated gene silencing (RNAi) by microRNAs (miRNAs) and mRNA export. The CBC complex is involved in mRNA export from the nucleus, leading to the recruitment of the mRNA export machinery to the 5' end of mRNA and to mRNA export in a 5' to 3' direction through the nuclear pore. The CBC complex is also involved in mediating U snRNA and intronless mRNAs export from the nucleus. The CBC complex is essential for a pioneer round of mRNA translation, before steady state translation when the CBC complex is replaced by cytoplasmic cap-binding protein eIF4E. The pioneer round of mRNA translation mediated by the CBC complex plays a central role in nonsense-mediated mRNA decay (NMD), NMD only taking place in mRNAs bound to the CBC complex, but not on eIF4E-bound mRNAs. The CBC complex enhances NMD in mRNAs containing at least one exon-junction complex (EJC), promoting the interaction between upf1 and upf2. The CBC complex is also involved in 'failsafe' NMD, which is independent of the EJC complex, while it does not participate in Staufen-mediated mRNA decay (SMD). During cell proliferation, the CBC complex is also involved in microRNAs (miRNAs) biogenesis via its interaction with srrt/ars2, thereby being required for miRNA-mediated RNA interference. The CBC complex also acts as a negative regulator of parn, thereby acting as an inhibitor of mRNA deadenylation. In the CBC complex, ncbp2/cbp20 recognizes and binds capped RNAs (m7GpppG-capped RNA) but requires ncbp1/cbp80 to stabilize the movement of its N-terminal loop and lock the CBC into a high affinity cap-binding state with the cap structure. The conventional cap-binding complex with NCBP2 binds both small nuclear RNA (snRNA) and messenger (mRNA) and is involved in their export from the nucleus. This chain is Nuclear cap-binding protein subunit 2 (ncbp2), found in Esox lucius (Northern pike).